Reading from the N-terminus, the 321-residue chain is Aspartate carbamoyltransferase catalytic subunit (321 aa).

The carbamoyl phosphate site is built by arginine 65 and threonine 66. Lysine 93 serves as a coordination point for L-aspartate. The carbamoyl phosphate site is built by arginine 115, histidine 143, and glutamine 146. Positions 176 and 230 each coordinate L-aspartate. Carbamoyl phosphate-binding residues include glycine 271 and proline 272.

It belongs to the aspartate/ornithine carbamoyltransferase superfamily. ATCase family. Heterododecamer (2C3:3R2) of six catalytic PyrB chains organized as two trimers (C3), and six regulatory PyrI chains organized as three dimers (R2).

The enzyme catalyses carbamoyl phosphate + L-aspartate = N-carbamoyl-L-aspartate + phosphate + H(+). The protein operates within pyrimidine metabolism; UMP biosynthesis via de novo pathway; (S)-dihydroorotate from bicarbonate: step 2/3. In terms of biological role, catalyzes the condensation of carbamoyl phosphate and aspartate to form carbamoyl aspartate and inorganic phosphate, the committed step in the de novo pyrimidine nucleotide biosynthesis pathway. The polypeptide is Aspartate carbamoyltransferase catalytic subunit (Bartonella henselae (strain ATCC 49882 / DSM 28221 / CCUG 30454 / Houston 1) (Rochalimaea henselae)).